Consider the following 279-residue polypeptide: Large ribosomal subunit protein uL2 (279 aa).

Disordered stretches follow at residues 34–55 (LAPL…RHKG) and 221–279 (RGMA…RKAK). Over residues 40–55 (SGGRNRAGRITSRHKG) the composition is skewed to basic residues. Gly residues predominate over residues 232-242 (MGGGEGRSKSG). Residues 259–279 (LKTRNKKKASSKLIVRGRKAK) are compositionally biased toward basic residues.

It belongs to the universal ribosomal protein uL2 family. In terms of assembly, part of the 50S ribosomal subunit. Forms a bridge to the 30S subunit in the 70S ribosome.

One of the primary rRNA binding proteins. Required for association of the 30S and 50S subunits to form the 70S ribosome, for tRNA binding and peptide bond formation. It has been suggested to have peptidyltransferase activity; this is somewhat controversial. Makes several contacts with the 16S rRNA in the 70S ribosome. This chain is Large ribosomal subunit protein uL2, found in Chlorobium phaeobacteroides (strain BS1).